The chain runs to 69 residues: uncharacterized protein (69 aa).

The region spanning 5–60 (IREHRKELGLTQEELAERVGVTRQTIIALEKGRYSPSLILAHRIARALGREHIEDI) is the HTH cro/C1-type domain. A DNA-binding region (H-T-H motif) is located at residues 16–35 (QEELAERVGVTRQTIIALEK).

This is an uncharacterized protein from Methanothermobacter thermautotrophicus (strain ATCC 29096 / DSM 1053 / JCM 10044 / NBRC 100330 / Delta H) (Methanobacterium thermoautotrophicum).